Here is an 842-residue protein sequence, read N- to C-terminus: DNA gyrase subunit A (842 aa).

In terms of domain architecture, Topo IIA-type catalytic spans 42–511 (LPEVRDGLKP…ADGEVSDEDL (470 aa)). Tyr130 (O-(5'-phospho-DNA)-tyrosine intermediate) is an active-site residue. The GyrA-box motif lies at 538–544 (QKRGGKG). Positions 822–842 (EDEAAESISESDADTAESPEA) are disordered.

This sequence belongs to the type II topoisomerase GyrA/ParC subunit family. As to quaternary structure, heterotetramer, composed of two GyrA and two GyrB chains. In the heterotetramer, GyrA contains the active site tyrosine that forms a transient covalent intermediate with DNA, while GyrB binds cofactors and catalyzes ATP hydrolysis.

The protein localises to the cytoplasm. It catalyses the reaction ATP-dependent breakage, passage and rejoining of double-stranded DNA.. With respect to regulation, inhibited by 4-quinoline drugs (nalidixic acid, ciprofloxacin, ofloxacin), although it is much less sensitive than the corresponding enzyme from E.coli. Functionally, a type II topoisomerase that negatively supercoils closed circular double-stranded (ds) DNA in an ATP-dependent manner to modulate DNA topology and maintain chromosomes in an underwound state. Negative supercoiling favors strand separation, and DNA replication, transcription, recombination and repair, all of which involve strand separation. Also able to catalyze the interconversion of other topological isomers of dsDNA rings, including catenanes and knotted rings. Type II topoisomerases break and join 2 DNA strands simultaneously in an ATP-dependent manner. The polypeptide is DNA gyrase subunit A (Mycolicibacterium smegmatis (strain ATCC 700084 / mc(2)155) (Mycobacterium smegmatis)).